The chain runs to 235 residues: Uracil-DNA glycosylase (235 aa).

Asp71 acts as the Proton acceptor in catalysis.

This sequence belongs to the uracil-DNA glycosylase (UDG) superfamily. UNG family.

It localises to the cytoplasm. The enzyme catalyses Hydrolyzes single-stranded DNA or mismatched double-stranded DNA and polynucleotides, releasing free uracil.. Functionally, excises uracil residues from the DNA which can arise as a result of misincorporation of dUMP residues by DNA polymerase or due to deamination of cytosine. This Helicobacter hepaticus (strain ATCC 51449 / 3B1) protein is Uracil-DNA glycosylase.